Reading from the N-terminus, the 575-residue chain is Dihydroxy-acid dehydratase (575 aa).

A disordered region spans residues 1–25; the sequence is MPTTDSARAADIKQPDIKPRSRDVT. Over residues 8–25 the composition is skewed to basic and acidic residues; the sequence is RAADIKQPDIKPRSRDVT. Position 64 (Cys64) interacts with [2Fe-2S] cluster. Asp96 serves as a coordination point for Mg(2+). Cys137 contributes to the [2Fe-2S] cluster binding site. The Mg(2+) site is built by Asp138 and Lys139. The residue at position 139 (Lys139) is an N6-carboxylysine. Residue Cys214 participates in [2Fe-2S] cluster binding. Glu465 contacts Mg(2+). Ser491 acts as the Proton acceptor in catalysis.

Belongs to the IlvD/Edd family. In terms of assembly, homodimer. It depends on [2Fe-2S] cluster as a cofactor. Mg(2+) is required as a cofactor.

The catalysed reaction is (2R)-2,3-dihydroxy-3-methylbutanoate = 3-methyl-2-oxobutanoate + H2O. It carries out the reaction (2R,3R)-2,3-dihydroxy-3-methylpentanoate = (S)-3-methyl-2-oxopentanoate + H2O. Its pathway is amino-acid biosynthesis; L-isoleucine biosynthesis; L-isoleucine from 2-oxobutanoate: step 3/4. The protein operates within amino-acid biosynthesis; L-valine biosynthesis; L-valine from pyruvate: step 3/4. In terms of biological role, functions in the biosynthesis of branched-chain amino acids. Catalyzes the dehydration of (2R,3R)-2,3-dihydroxy-3-methylpentanoate (2,3-dihydroxy-3-methylvalerate) into 2-oxo-3-methylpentanoate (2-oxo-3-methylvalerate) and of (2R)-2,3-dihydroxy-3-methylbutanoate (2,3-dihydroxyisovalerate) into 2-oxo-3-methylbutanoate (2-oxoisovalerate), the penultimate precursor to L-isoleucine and L-valine, respectively. This chain is Dihydroxy-acid dehydratase, found in Mycolicibacterium paratuberculosis (strain ATCC BAA-968 / K-10) (Mycobacterium paratuberculosis).